The following is a 452-amino-acid chain: GTPase Der (452 aa).

EngA-type G domains are found at residues Lys9–Asp170 and Leu185–Asn362. GTP contacts are provided by residues Gly15 to Ser22, Asp62 to Leu66, Asn124 to Glu127, Gly191 to Ser198, Asp238 to Leu242, and Asn303 to Asp306. In terms of domain architecture, KH-like spans Lys363–Lys448.

Belongs to the TRAFAC class TrmE-Era-EngA-EngB-Septin-like GTPase superfamily. EngA (Der) GTPase family. Associates with the 50S ribosomal subunit.

In terms of biological role, GTPase that plays an essential role in the late steps of ribosome biogenesis. The sequence is that of GTPase Der from Rickettsia bellii (strain RML369-C).